Consider the following 1513-residue polypeptide: DNA-directed RNA polymerase subunit beta'' (1513 aa).

Zn(2+)-binding residues include cysteine 220, cysteine 296, cysteine 303, and cysteine 306. A disordered region spans residues 644–769; that stretch reads RTREKDSENE…EYGNPEEDSV (126 aa). Residues 659–679 show a composition bias toward basic and acidic residues; sequence NEYRTREEECKTLEDEYRTRE. Acidic residues predominate over residues 680–707; the sequence is EEYETLEDEYGIPENEYETLEDEYGILE. Residues 726–737 are compositionally biased toward basic and acidic residues; it reads NKYRPREDKYGT. Residues 738–767 show a composition bias toward acidic residues; sequence LEEDSEDEHGTLEEDSEEDSEDEYGNPEED.

It belongs to the RNA polymerase beta' chain family. RpoC2 subfamily. As to quaternary structure, in plastids the minimal PEP RNA polymerase catalytic core is composed of four subunits: alpha, beta, beta', and beta''. When a (nuclear-encoded) sigma factor is associated with the core the holoenzyme is formed, which can initiate transcription. The cofactor is Zn(2+).

It is found in the plastid. It localises to the chloroplast. The catalysed reaction is RNA(n) + a ribonucleoside 5'-triphosphate = RNA(n+1) + diphosphate. In terms of biological role, DNA-dependent RNA polymerase catalyzes the transcription of DNA into RNA using the four ribonucleoside triphosphates as substrates. The chain is DNA-directed RNA polymerase subunit beta'' from Oryza sativa (Rice).